A 238-amino-acid polypeptide reads, in one-letter code: ATP-dependent dethiobiotin synthetase BioD (238 aa).

E13–V18 lines the ATP pocket. A Mg(2+)-binding site is contributed by T17. Residue K38 is part of the active site. T42 provides a ligand contact to substrate. Mg(2+)-binding residues include R59 and E111. Residues E111–G114, N175–Q176, and P204–L206 contribute to the ATP site.

This sequence belongs to the dethiobiotin synthetase family. In terms of assembly, homodimer. The cofactor is Mg(2+).

Its subcellular location is the cytoplasm. The catalysed reaction is (7R,8S)-7,8-diammoniononanoate + CO2 + ATP = (4R,5S)-dethiobiotin + ADP + phosphate + 3 H(+). Its pathway is cofactor biosynthesis; biotin biosynthesis; biotin from 7,8-diaminononanoate: step 1/2. Catalyzes a mechanistically unusual reaction, the ATP-dependent insertion of CO2 between the N7 and N8 nitrogen atoms of 7,8-diaminopelargonic acid (DAPA, also called 7,8-diammoniononanoate) to form a ureido ring. The chain is ATP-dependent dethiobiotin synthetase BioD from Geobacillus kaustophilus (strain HTA426).